A 544-amino-acid polypeptide reads, in one-letter code: Probable protein kinase UbiB (544 aa).

Residues 123 to 501 (DFDIKPLASA…KRQQAKGQFL (379 aa)) enclose the Protein kinase domain. ATP-binding positions include 129–137 (LASASIAQV) and K152. D287 acts as the Proton acceptor in catalysis. The helical transmembrane segment at 515 to 537 (LLTSNITVLASISAATGAAFWLF) threads the bilayer.

The protein belongs to the ABC1 family. UbiB subfamily.

Its subcellular location is the cell inner membrane. Its pathway is cofactor biosynthesis; ubiquinone biosynthesis [regulation]. Functionally, is probably a protein kinase regulator of UbiI activity which is involved in aerobic coenzyme Q (ubiquinone) biosynthesis. This Aliivibrio fischeri (strain ATCC 700601 / ES114) (Vibrio fischeri) protein is Probable protein kinase UbiB.